The sequence spans 942 residues: MAVMEVACPGTPGSAVGQQKELAKAKEKTQSLGKKQSCIFKLEAVEKSPVFCGKWEILNDVITKGTAKDGSEGGPPAISIIAQAECENSQEFSPTFSERIFIAGSQQYSQSESLDQIPNNVAHATEGKMARVCRRGKRHGKARKKRRKKRSKSLAQAGVALAKPLPRTPEQESCTIPVQEDESPLGNLYARNVSQFTKPLGGPGLGHLCFKKQDEGLRPVLPRPELHKLISPLQCLNHVWKLHHPQATGPRPHPTHPFPYSGMPHPFPFYPLEPWKPYMLDSAVLDKLAGVSGQRPLPGPPHLSQLAHGDSQKPLPGPHLESSCPSRGALEKVPVEEYLVHALQGSVSSGQAHSLASLAKTWSSGSAKLQRLGPETEDNEGVLLTEKLKPVDYEYREEVHWMTHQPRVGRGSFGEVHRMKDKQTGFQCAVKKVRLEVFRVEELVACAGLSSPRIVPLYGAVREGPWVNIFMELLEGGSLGQLIKQMGCLPEDRALYYLGQALEGLEYLHTRRILHGDVKADNVLLSSDGSRAALCDFGHALCLQPDGLGKSLLTGDYIPGTETHMAPEVVMGKPCDAKVDIWSSCCMMLHMLNGCHPWTQYFRGPLCLKIASEPPPIREIPPSCAPLTAQAIQEGLRKEPVHRASAMELRRKVGKALQEVGGLKSPWKGEYKEPRPPPQDQATCHQTLPTPPRENPPAKANTDGAPEPQPPLPPEPPEPSKAPALNLSKEESGTWEPLPLSSLDPATAKGPSFPDRRATLPELELQQLEIELFLNSLSQPFSLEEQEQILSCLSIDSLSLSDDSEKNPSKASQSSRDTLSSGVHSWNSQAEARTCSCSTALARGRPTDIPSYFNGVKVQIQSLNGEHLHIREFHRVKVGDIATGISSQIPATAFSLVTKDGQPVCYDMEVPDSGIDLQCTLAPDGSFAWTWRVKHGQLENRP.

Over residues 136-152 the composition is skewed to basic residues; sequence GKRHGKARKKRRKKRSK. Disordered stretches follow at residues 136–156 and 291–326; these read GKRH…SLAQ and VSGQ…SCPS. In terms of domain architecture, Protein kinase spans 402-657; that stretch reads MTHQPRVGRG…ELRRKVGKAL (256 aa). The tract at residues 403 to 655 is interaction with ZFP91; that stretch reads THQPRVGRGS…AMELRRKVGK (253 aa). Residues 408–416 and K431 each bind ATP; that span reads VGRGSFGEV. Catalysis depends on D517, which acts as the Proton acceptor. T561 bears the Phosphothreonine mark. 2 disordered regions span residues 660–756 and 801–823; these read VGGL…FPDR and SDDS…SSGV. The span at 707–720 shows a compositional bias: pro residues; the sequence is EPQPPLPPEPPEPS. Over residues 809–823 the composition is skewed to polar residues; the sequence is SKASQSSRDTLSSGV.

Belongs to the protein kinase superfamily. STE Ser/Thr protein kinase family. MAP kinase kinase kinase subfamily. In terms of assembly, interacts with TRAF2, TRAF3, TRAF5, TRAF6, IKKA and NF-kappa-B2/P100. Interacts with PELI3. Interacts with NIBP; the interaction is direct. Interacts with ARRB1 and ARRB2. Interacts with GRB10. Interacts with ZFP91. Interacts with NLRP12; this interaction promotes proteasomal degradation of MAP3K14. Directly interacts with DDX3X. Interacts (via C-terminus and kinase domain) with PPPC3A (via N-terminus) and PPP3CB. Phosphorylation at Thr-561 is required to activate its kinase activity and 'Lys-63'-linked polyubiquitination. Phosphorylated by CHUK/IKKA leading to MAP3K14 destabilization. Autophosphorylated. In terms of processing, ubiquitinated. Undergoes both 'Lys-48'- and 'Lys-63'-linked polyubiquitination. 'Lys-48'-linked polyubiquitination leads to its degradation by the proteasome, while 'Lys-63'-linked polyubiquitination stabilizes and activates it.

Its subcellular location is the cytoplasm. The catalysed reaction is L-seryl-[protein] + ATP = O-phospho-L-seryl-[protein] + ADP + H(+). The enzyme catalyses L-threonyl-[protein] + ATP = O-phospho-L-threonyl-[protein] + ADP + H(+). Lymphotoxin beta-activated kinase which seems to be exclusively involved in the activation of NF-kappa-B and its transcriptional activity. Phosphorylates CHUK/IKKA. Promotes proteolytic processing of NFKB2/P100, which leads to activation of NF-kappa-B via the non-canonical pathway. Has an essential role in the non-canonical NF-kappa-B signalining that regulates genes encoding molecules involved in B-cell survival, lymphoid organogenesis, and immune response. Could act in a receptor-selective manner. The chain is Mitogen-activated protein kinase kinase kinase 14 from Mus musculus (Mouse).